A 208-amino-acid chain; its full sequence is Phomoidride biosynthesis cluster protein B (208 aa).

It belongs to the tstB family.

Functionally, phosphatidylethanolamine-binding protein; part of the gene cluster that mediates the biosynthesis of the antihypercholesterolemic agents phomoidrides which are dimeric anhydrides. Within the pathway, phiB is not essential for dimerization and its function has still to be determined. The pathway begins with the highly reducing polyketide synthase phiA that catalyzes the formation of a C12-fatty acyl-ACP, starting from one acetate and 5 malonate units. The hydrolase phiM is involved in the release of the C12-fatty acyl chain from phiA. The alkylcitrate synthase (ACS) phiJ and the alkylcitrate dehydratase (ACDH) phiI then give rise to decarboxylated monomeric anhydrides by coupling the C12-fatty acyl chain with oxalacetic acid. The cyclase phiC is responsible for the dimerization of the monomeric anhydrides which leads to the production of prephomoidride that contains the characteristic bicyclo[4.3.1]deca-1,6-diene system of phomoidrides. Iterative oxidation catalyzed by the alpha-ketoglutarate-dependent dioxygenase phiK produced then phomoidride A. Finally, the methyltransferase phiE converts phomoidride A to phomoidride B via an acetalization reaction. The phosphatidylethanolamine-binding protein phiB and phiN are not essential for dimerization and their functions have still to be determined. This is Phomoidride biosynthesis cluster protein B from Fungal sp. (strain ATCC 74256).